Here is a 209-residue protein sequence, read N- to C-terminus: Large ribosomal subunit protein uL3 (209 aa).

The protein belongs to the universal ribosomal protein uL3 family. In terms of assembly, part of the 50S ribosomal subunit. Forms a cluster with proteins L14 and L19.

Functionally, one of the primary rRNA binding proteins, it binds directly near the 3'-end of the 23S rRNA, where it nucleates assembly of the 50S subunit. This Brevibacillus brevis (strain 47 / JCM 6285 / NBRC 100599) protein is Large ribosomal subunit protein uL3.